The chain runs to 348 residues: MLPIRECVSQTPGYVPGEQPQTTDYIKLNTNENPYPPPDKIFEGLQQELTKVRLYPDPVSTQLRKAAANVFGISYQNILAGNGSDDILNIAVRTFVNPGEVVAFLDLTYSLYETIARVHGASIVQIPTNNQFELNGPIICPEAKLIFVASPNPPVGKHLNRDYLEETCKQATGVVLIDEAYVDFSDENHLDFLEKYDNVIISRTMSKSYSLAGMRVGFGVSSTEIIEQMDKVRDSYNLDRIAQTLGTAVLNYQDYFKGVWQQVRHTRTRLIESLRTLEFLVFDSDSNFVLASPQWIAASDLYTQLKERKVLVRYFSHPRIKDYVRISIGTDQEIDRLLEAIHEIKGSN.

The residue at position 207 (K207) is an N6-(pyridoxal phosphate)lysine.

It belongs to the class-II pyridoxal-phosphate-dependent aminotransferase family. Histidinol-phosphate aminotransferase subfamily. Homodimer. Pyridoxal 5'-phosphate is required as a cofactor.

The enzyme catalyses L-histidinol phosphate + 2-oxoglutarate = 3-(imidazol-4-yl)-2-oxopropyl phosphate + L-glutamate. It participates in amino-acid biosynthesis; L-histidine biosynthesis; L-histidine from 5-phospho-alpha-D-ribose 1-diphosphate: step 7/9. This Rippkaea orientalis (strain PCC 8801 / RF-1) (Cyanothece sp. (strain PCC 8801)) protein is Histidinol-phosphate aminotransferase.